The chain runs to 225 residues: 7-carboxy-7-deazaguanine synthase (225 aa).

Substrate contacts are provided by residues 12–14 (IQG) and Arg-27. The Radical SAM core domain occupies 18 to 225 (YIGVRQLFVR…PQVHKYLGVR (208 aa)). Residues Cys-31, Cys-35, and Cys-38 each coordinate [4Fe-4S] cluster. Residue Thr-40 coordinates Mg(2+). Residue Thr-80 coordinates substrate. Gly-82 serves as a coordination point for S-adenosyl-L-methionine.

Belongs to the radical SAM superfamily. 7-carboxy-7-deazaguanine synthase family. As to quaternary structure, homodimer. It depends on [4Fe-4S] cluster as a cofactor. The cofactor is S-adenosyl-L-methionine. Requires Mg(2+) as cofactor.

It catalyses the reaction 6-carboxy-5,6,7,8-tetrahydropterin + H(+) = 7-carboxy-7-deazaguanine + NH4(+). It participates in purine metabolism; 7-cyano-7-deazaguanine biosynthesis. In terms of biological role, catalyzes the complex heterocyclic radical-mediated conversion of 6-carboxy-5,6,7,8-tetrahydropterin (CPH4) to 7-carboxy-7-deazaguanine (CDG), a step common to the biosynthetic pathways of all 7-deazapurine-containing compounds. In Archaeoglobus fulgidus (strain ATCC 49558 / DSM 4304 / JCM 9628 / NBRC 100126 / VC-16), this protein is 7-carboxy-7-deazaguanine synthase.